Consider the following 472-residue polypeptide: Divinyl ether synthase CYP74 (472 aa).

Heme is bound at residue C425.

Belongs to the cytochrome P450 family. Heme is required as a cofactor. Expressed mainly in bulbs, and at lower levels in roots.

It catalyses the reaction (13S)-hydroperoxy-(9Z,11E)-octadecadienoate = etheroleate + H2O. It carries out the reaction (13S)-hydroperoxy-(9Z,11E,15Z)-octadecatrienoate = etherolenate + H2O. The catalysed reaction is (9S)-hydroperoxy-(10E,12Z)-octadecadienoate = colneleate + H2O. The enzyme catalyses (9S)-hydroperoxy-(10E,12Z,15Z)-octadecatrienoate = colnelenate + H2O. It functions in the pathway lipid metabolism; oxylipin biosynthesis. Its function is as follows. Divinyl ether synthase involved in oxylipin biosynthesis. Catalyzes the conversion of (13S)-hydroperoxy-(9Z,11E)-octadecadienoate (13-HPOD) to etheroleate and (13S)-hydroperoxy-(9Z,11E,15Z)-octadecatrienoate (13-HPOT) to etherolenate. Catalyzes the conversion of (9S)-hydroperoxy-(10E,12Z)-octadecadienoate (9-HPOD) to colneleate and (9S)-hydroperoxy-(10E,12Z,15Z)-octadecatrienoate (9-HPOT) colnelenate. This is Divinyl ether synthase CYP74 from Allium sativum (Garlic).